A 200-amino-acid chain; its full sequence is Recombination protein RecR (200 aa).

The C4-type zinc-finger motif lies at 59 to 74; sequence CDICGNVCESSPCPVC. In terms of domain architecture, Toprim spans 82–177; sequence SVICVVEEPK…KVTRLASGLP (96 aa).

The protein belongs to the RecR family.

Its function is as follows. May play a role in DNA repair. It seems to be involved in an RecBC-independent recombinational process of DNA repair. It may act with RecF and RecO. This Bifidobacterium longum subsp. infantis (strain ATCC 15697 / DSM 20088 / JCM 1222 / NCTC 11817 / S12) protein is Recombination protein RecR.